A 665-amino-acid chain; its full sequence is Secreted LysM effector Lys3 (665 aa).

Positions 1–19 are cleaved as a signal peptide; that stretch reads MLWLTVSLTGFALLGVVAA. N43 and N153 each carry an N-linked (GlcNAc...) asparagine glycan. LysM domains lie at 166–211, 216–264, and 303–349; these read RTYT…TLCL, TLRK…YICI, and KWYV…AYCV. N234 carries an N-linked (GlcNAc...) asparagine glycan. N-linked (GlcNAc...) asparagine glycosylation occurs at N398. The region spanning 409 to 454 is the LysM 4 domain; that stretch reads SWSDAAKLNSCSFIAHINGVTVSQLLQWNPSLSKDSCSLSRELYYC. The N-linked (GlcNAc...) asparagine glycan is linked to N531. The interval 585-610 is disordered; that stretch reads SSVSMTNSAPATATSTGGPPAPTQDG. Residues 592–602 show a composition bias toward low complexity; that stretch reads SAPATATSTGG. N614 carries N-linked (GlcNAc...) asparagine glycosylation. A LysM 5 domain is found at 617 to 663; it reads KWHVVESGDGCWAIYTKYGITSDQLFEWNTKISKDCSNIWLGYAVCV.

The protein belongs to the secreted LysM effector family.

Might have a role in sequestration of chitin oligosaccharides (breakdown products of fungal cell walls that are released during invasion and act as triggers of host immunity) to dampen host defense. The protein is Secreted LysM effector Lys3 of Pochonia chlamydosporia (strain 123) (Metacordyceps chlamydosporia).